A 1274-amino-acid polypeptide reads, in one-letter code: Myosin-binding protein C, cardiac-type (1274 aa).

Methionine 1 is subject to N-acetylmethionine. At serine 47 the chain carries Phosphoserine. Low complexity predominate over residues 107-141 (APAPAEATGAPGEAPAPAAELGESAPSPKGSSSAA). Residues 107-153 (APAPAEATGAPGEAPAPAAELGESAPSPKGSSSAALNGPTPGAPDDP) form a disordered region. Positions 153-256 (PIGLFVMRPQ…FDCSNFNLTV (104 aa)) constitute an Ig-like C2-type 1 domain. Zn(2+) is bound by residues glutamine 208, histidine 210, glutamate 223, and histidine 225. Phosphoserine; by PKA and PKC is present on residues serine 275, serine 284, and serine 304. Residues serine 311 and serine 427 each carry the phosphoserine modification. Ig-like C2-type domains lie at 362 to 452 (STAF…VKEP), 453 to 543 (PVLI…VQEK), 544 to 633 (KLEV…HFME), and 645 to 771 (PKIH…VIDV). A disulfide bond links cysteine 436 and cysteine 443. Serine 550 is modified (phosphoserine). Position 607 is a phosphothreonine (threonine 607). 2 Fibronectin type-III domains span residues 774–870 (APAA…IGPP) and 872–967 (EPTH…VQEI). One can recognise an Ig-like C2-type 6 domain in the interval 971 to 1065 (PRLQLPRHLR…ATLVLQVVDK (95 aa)). A Fibronectin type-III 3 domain is found at 1068 to 1163 (PPQDLRVTDA…TKEPVFIPRP (96 aa)). The Ig-like C2-type 7 domain maps to 1181–1274 (PSFTQPLVNR…ECRLEVRVPQ (94 aa)). Arginine 1241 is subject to Omega-N-methylarginine.

It belongs to the immunoglobulin superfamily. MyBP family. In terms of processing, substrate for phosphorylation by PKA and PKC. Reversible phosphorylation appears to modulate contraction. Polyubiquitinated.

In terms of biological role, thick filament-associated protein located in the crossbridge region of vertebrate striated muscle a bands. In vitro it binds MHC, F-actin and native thin filaments, and modifies the activity of actin-activated myosin ATPase. It may modulate muscle contraction or may play a more structural role. The chain is Myosin-binding protein C, cardiac-type (MYBPC3) from Homo sapiens (Human).